The following is a 395-amino-acid chain: Succinyl-diaminopimelate desuccinylase (395 aa).

A Zn(2+)-binding site is contributed by His-74. Asp-76 is an active-site residue. Position 107 (Asp-107) interacts with Zn(2+). Glu-141 functions as the Proton acceptor in the catalytic mechanism. Positions 142, 170, and 368 each coordinate Zn(2+).

The protein belongs to the peptidase M20A family. DapE subfamily. In terms of assembly, homodimer. Zn(2+) serves as cofactor. The cofactor is Co(2+).

It catalyses the reaction N-succinyl-(2S,6S)-2,6-diaminopimelate + H2O = (2S,6S)-2,6-diaminopimelate + succinate. It participates in amino-acid biosynthesis; L-lysine biosynthesis via DAP pathway; LL-2,6-diaminopimelate from (S)-tetrahydrodipicolinate (succinylase route): step 3/3. Its function is as follows. Catalyzes the hydrolysis of N-succinyl-L,L-diaminopimelic acid (SDAP), forming succinate and LL-2,6-diaminopimelate (DAP), an intermediate involved in the bacterial biosynthesis of lysine and meso-diaminopimelic acid, an essential component of bacterial cell walls. The chain is Succinyl-diaminopimelate desuccinylase from Brucella abortus (strain S19).